Reading from the N-terminus, the 361-residue chain is Probable dual-specificity RNA methyltransferase RlmN (361 aa).

Residue Glu-99 is the Proton acceptor of the active site. Positions 105–342 (GPNRMTACVS…VTIRKSYGTP (238 aa)) constitute a Radical SAM core domain. A disulfide bridge links Cys-112 with Cys-347. [4Fe-4S] cluster-binding residues include Cys-119, Cys-123, and Cys-126. S-adenosyl-L-methionine-binding positions include 171 to 172 (GE), Ser-204, 227 to 229 (SLH), and Asn-304. Catalysis depends on Cys-347, which acts as the S-methylcysteine intermediate.

Belongs to the radical SAM superfamily. RlmN family. The cofactor is [4Fe-4S] cluster.

The protein resides in the cytoplasm. It catalyses the reaction adenosine(2503) in 23S rRNA + 2 reduced [2Fe-2S]-[ferredoxin] + 2 S-adenosyl-L-methionine = 2-methyladenosine(2503) in 23S rRNA + 5'-deoxyadenosine + L-methionine + 2 oxidized [2Fe-2S]-[ferredoxin] + S-adenosyl-L-homocysteine. It carries out the reaction adenosine(37) in tRNA + 2 reduced [2Fe-2S]-[ferredoxin] + 2 S-adenosyl-L-methionine = 2-methyladenosine(37) in tRNA + 5'-deoxyadenosine + L-methionine + 2 oxidized [2Fe-2S]-[ferredoxin] + S-adenosyl-L-homocysteine. Specifically methylates position 2 of adenine 2503 in 23S rRNA and position 2 of adenine 37 in tRNAs. The sequence is that of Probable dual-specificity RNA methyltransferase RlmN from Chlorobium luteolum (strain DSM 273 / BCRC 81028 / 2530) (Pelodictyon luteolum).